The following is a 92-amino-acid chain: Small ribosomal subunit protein uS19c (92 aa).

This sequence belongs to the universal ribosomal protein uS19 family.

It localises to the plastid. Its subcellular location is the chloroplast. Functionally, protein S19 forms a complex with S13 that binds strongly to the 16S ribosomal RNA. The protein is Small ribosomal subunit protein uS19c of Acorus calamus (Sweet flag).